We begin with the raw amino-acid sequence, 365 residues long: Alanine racemase (365 aa).

Catalysis depends on Lys-32, which acts as the Proton acceptor; specific for D-alanine. Position 32 is an N6-(pyridoxal phosphate)lysine (Lys-32). Arg-128 is a binding site for substrate. The Proton acceptor; specific for L-alanine role is filled by Tyr-257. Met-305 contacts substrate.

The protein belongs to the alanine racemase family. Pyridoxal 5'-phosphate serves as cofactor.

The enzyme catalyses L-alanine = D-alanine. The protein operates within amino-acid biosynthesis; D-alanine biosynthesis; D-alanine from L-alanine: step 1/1. Catalyzes the interconversion of L-alanine and D-alanine. May also act on other amino acids. The polypeptide is Alanine racemase (alr) (Francisella tularensis subsp. mediasiatica (strain FSC147)).